A 101-amino-acid polypeptide reads, in one-letter code: NADH-quinone oxidoreductase subunit K (101 aa).

3 helical membrane passes run 4–24 (LGHL…GIFL), 30–50 (IVLL…FIAF), and 62–82 (FVFF…AILV).

It belongs to the complex I subunit 4L family. NDH-1 is composed of 14 different subunits. Subunits NuoA, H, J, K, L, M, N constitute the membrane sector of the complex.

The protein localises to the cell inner membrane. It catalyses the reaction a quinone + NADH + 5 H(+)(in) = a quinol + NAD(+) + 4 H(+)(out). Its function is as follows. NDH-1 shuttles electrons from NADH, via FMN and iron-sulfur (Fe-S) centers, to quinones in the respiratory chain. The immediate electron acceptor for the enzyme in this species is believed to be ubiquinone. Couples the redox reaction to proton translocation (for every two electrons transferred, four hydrogen ions are translocated across the cytoplasmic membrane), and thus conserves the redox energy in a proton gradient. This is NADH-quinone oxidoreductase subunit K from Xanthomonas axonopodis pv. citri (strain 306).